The primary structure comprises 344 residues: Centromere protein N (344 aa).

This sequence belongs to the CENP-N/CHL4 family.

The protein resides in the nucleus. It is found in the chromosome. It localises to the centromere. Its function is as follows. Probable component of a centromeric complex involved in assembly of kinetochore proteins, mitotic progression and chromosome segregation. This Gallus gallus (Chicken) protein is Centromere protein N (CENPN).